A 183-amino-acid chain; its full sequence is uncharacterized protein (183 aa).

The signal sequence occupies residues 1 to 17; the sequence is MVLFILVLYTCIQDGNG.

This is an uncharacterized protein from Saccharomyces cerevisiae (strain ATCC 204508 / S288c) (Baker's yeast).